The primary structure comprises 291 residues: Acetyl-coenzyme A carboxylase carboxyl transferase subunit beta (291 aa).

Residues 23 to 291 (VYTKDPVSGE…TPASASVAKS (269 aa)) enclose the CoA carboxyltransferase N-terminal domain.

Belongs to the AccD/PCCB family. In terms of assembly, acetyl-CoA carboxylase is a heterohexamer composed of biotin carboxyl carrier protein (AccB), biotin carboxylase (AccC) and two subunits each of ACCase subunit alpha (AccA) and ACCase subunit beta (AccD).

The protein localises to the cytoplasm. The enzyme catalyses N(6)-carboxybiotinyl-L-lysyl-[protein] + acetyl-CoA = N(6)-biotinyl-L-lysyl-[protein] + malonyl-CoA. Its pathway is lipid metabolism; malonyl-CoA biosynthesis; malonyl-CoA from acetyl-CoA: step 1/1. Component of the acetyl coenzyme A carboxylase (ACC) complex. Biotin carboxylase (BC) catalyzes the carboxylation of biotin on its carrier protein (BCCP) and then the CO(2) group is transferred by the transcarboxylase to acetyl-CoA to form malonyl-CoA. This is Acetyl-coenzyme A carboxylase carboxyl transferase subunit beta from Opitutus terrae (strain DSM 11246 / JCM 15787 / PB90-1).